The chain runs to 85 residues: NAD(P)H-quinone oxidoreductase subunit L (85 aa).

The next 2 helical transmembrane spans lie at 17–37 (IVAV…PGFV) and 54–74 (AFMY…SPFL).

The protein belongs to the complex I NdhL subunit family. In terms of assembly, NDH-1 can be composed of about 15 different subunits; different subcomplexes with different compositions have been identified which probably have different functions.

The protein resides in the cellular thylakoid membrane. It catalyses the reaction a plastoquinone + NADH + (n+1) H(+)(in) = a plastoquinol + NAD(+) + n H(+)(out). The catalysed reaction is a plastoquinone + NADPH + (n+1) H(+)(in) = a plastoquinol + NADP(+) + n H(+)(out). In terms of biological role, NDH-1 shuttles electrons from an unknown electron donor, via FMN and iron-sulfur (Fe-S) centers, to quinones in the respiratory and/or the photosynthetic chain. The immediate electron acceptor for the enzyme in this species is believed to be plastoquinone. Couples the redox reaction to proton translocation, and thus conserves the redox energy in a proton gradient. Cyanobacterial NDH-1 also plays a role in inorganic carbon-concentration. This is NAD(P)H-quinone oxidoreductase subunit L from Crocosphaera subtropica (strain ATCC 51142 / BH68) (Cyanothece sp. (strain ATCC 51142)).